The primary structure comprises 414 residues: Bystin (414 aa).

Positions 1-11 are enriched in basic residues; it reads MSAKRNTKLRH. Residues 1–91 form a disordered region; it reads MSAKRNTKLR…PSDDEGQADD (91 aa). Positions 12 to 24 are enriched in basic and acidic residues; it reads APLEHAYVDDKSV. Over residues 25-34 the composition is skewed to basic residues; the sequence is RRNKRSKQRG.

It belongs to the bystin family.

Its subcellular location is the nucleus. The protein localises to the nucleolus. Its function is as follows. Required for processing of 20S pre-rRNA precursor and biogenesis of 40S ribosomal subunits. This is Bystin (bysl) from Monosiga brevicollis (Choanoflagellate).